The sequence spans 176 residues: Translation initiation factor IF-3 (176 aa).

This sequence belongs to the IF-3 family. Monomer.

The protein localises to the cytoplasm. IF-3 binds to the 30S ribosomal subunit and shifts the equilibrium between 70S ribosomes and their 50S and 30S subunits in favor of the free subunits, thus enhancing the availability of 30S subunits on which protein synthesis initiation begins. The sequence is that of Translation initiation factor IF-3 from Nitratidesulfovibrio vulgaris (strain ATCC 29579 / DSM 644 / CCUG 34227 / NCIMB 8303 / VKM B-1760 / Hildenborough) (Desulfovibrio vulgaris).